A 133-amino-acid chain; its full sequence is CDGSH iron-sulfur domain-containing protein 2 homolog (133 aa).

Topologically, residues 1-35 are lumenal; it reads MEPISHLVKSSLPNYLSSLPVPDSIGGWFKLSFKD. A helical transmembrane segment spans residues 36 to 58; that stretch reads WLALIPPTVVVAGIGYTAYLAYC. At 59 to 133 the chain is on the cytoplasmic side; the sequence is PAARASCSAK…DNVGPIVIKK (75 aa). C100, C102, C111, and H115 together coordinate [2Fe-2S] cluster.

It belongs to the CISD protein family. CISD2 subfamily. Requires [2Fe-2S] cluster as cofactor.

The protein resides in the endoplasmic reticulum membrane. This is CDGSH iron-sulfur domain-containing protein 2 homolog from Drosophila sechellia (Fruit fly).